We begin with the raw amino-acid sequence, 151 residues long: Small ribosomal subunit protein uS15 (151 aa).

The protein belongs to the universal ribosomal protein uS15 family. As to quaternary structure, component of the small ribosomal subunit. Mature ribosomes consist of a small (40S) and a large (60S) subunit. The 40S subunit contains about 32 different proteins and 1 molecule of RNA (18S). The 60S subunit contains 45 different proteins and 3 molecules of RNA (25S, 5.8S and 5S).

It is found in the cytoplasm. Its function is as follows. Component of the ribosome, a large ribonucleoprotein complex responsible for the synthesis of proteins in the cell. The small ribosomal subunit (SSU) binds messenger RNAs (mRNAs) and translates the encoded message by selecting cognate aminoacyl-transfer RNA (tRNA) molecules. The large subunit (LSU) contains the ribosomal catalytic site termed the peptidyl transferase center (PTC), which catalyzes the formation of peptide bonds, thereby polymerizing the amino acids delivered by tRNAs into a polypeptide chain. The nascent polypeptides leave the ribosome through a tunnel in the LSU and interact with protein factors that function in enzymatic processing, targeting, and the membrane insertion of nascent chains at the exit of the ribosomal tunnel. The chain is Small ribosomal subunit protein uS15 (RPS13) from Candida albicans (strain SC5314 / ATCC MYA-2876) (Yeast).